The following is a 216-amino-acid chain: Adenylate kinase (216 aa).

Position 10–15 (10–15 (GAGKGT)) interacts with ATP. The segment at 30 to 59 (STGDMLRAAVKAGTELGIKAKSIMDAGGLV) is NMP. Residues T31, R36, 57–59 (GLV), 85–88 (GFPR), and Q92 contribute to the AMP site. Residues 122–159 (GRRVHEASGRVYHIVYNPPKIAGKDDITGEELVQRKDD) are LID. Residues R123 and 132-133 (VY) contribute to the ATP site. R156 and R167 together coordinate AMP. G202 is a binding site for ATP.

It belongs to the adenylate kinase family. Monomer.

Its subcellular location is the cytoplasm. The catalysed reaction is AMP + ATP = 2 ADP. Its pathway is purine metabolism; AMP biosynthesis via salvage pathway; AMP from ADP: step 1/1. Functionally, catalyzes the reversible transfer of the terminal phosphate group between ATP and AMP. Plays an important role in cellular energy homeostasis and in adenine nucleotide metabolism. The protein is Adenylate kinase of Pseudomonas fluorescens (strain Pf0-1).